A 160-amino-acid chain; its full sequence is Nascent polypeptide-associated complex subunit beta (160 aa).

Disordered stretches follow at residues Gly-16–Asp-36 and Glu-118–Glu-160. Positions Thr-20–Lys-30 are enriched in basic residues. Residues Gly-33 to Val-98 enclose the NAC-A/B domain. Basic and acidic residues predominate over residues Gln-124–Lys-134. Residues Asp-135 to Pro-145 are compositionally biased toward acidic residues.

It belongs to the NAC-beta family. As to quaternary structure, part of the nascent polypeptide-associated complex (NAC), consisting of EGD2 and EGD1. NAC associates with ribosomes via EGD1.

Its subcellular location is the cytoplasm. It localises to the nucleus. Functionally, component of the nascent polypeptide-associated complex (NAC), a dynamic component of the ribosomal exit tunnel, protecting the emerging polypeptides from interaction with other cytoplasmic proteins to ensure appropriate nascent protein targeting. The NAC complex also promotes mitochondrial protein import by enhancing productive ribosome interactions with the outer mitochondrial membrane and blocks the inappropriate interaction of ribosomes translating non-secretory nascent polypeptides with translocation sites in the membrane of the endoplasmic reticulum. EGD1 may act as a transcription factor that exert a negative effect on the expression of several genes that are transcribed by RNA polymerase II. This chain is Nascent polypeptide-associated complex subunit beta (EGD1), found in Phaeosphaeria nodorum (strain SN15 / ATCC MYA-4574 / FGSC 10173) (Glume blotch fungus).